We begin with the raw amino-acid sequence, 151 residues long: Large ribosomal subunit protein bL9 (151 aa).

The protein belongs to the bacterial ribosomal protein bL9 family.

In terms of biological role, binds to the 23S rRNA. The protein is Large ribosomal subunit protein bL9 of Chlorobium chlorochromatii (strain CaD3).